A 359-amino-acid polypeptide reads, in one-letter code: Membrane-bound lytic murein transglycosylase C (359 aa).

The N-terminal stretch at 1–16 is a signal peptide; the sequence is MKKYLALALIAPLLIS. Cys-17 is lipidated: N-palmitoyl cysteine. Cys-17 is lipidated: S-diacylglycerol cysteine.

This sequence belongs to the transglycosylase Slt family.

The protein resides in the cell outer membrane. It carries out the reaction Exolytic cleavage of the (1-&gt;4)-beta-glycosidic linkage between N-acetylmuramic acid (MurNAc) and N-acetylglucosamine (GlcNAc) residues in peptidoglycan, from either the reducing or the non-reducing ends of the peptidoglycan chains, with concomitant formation of a 1,6-anhydrobond in the MurNAc residue.. Murein-degrading enzyme. May play a role in recycling of muropeptides during cell elongation and/or cell division. This is Membrane-bound lytic murein transglycosylase C from Escherichia coli O7:K1 (strain IAI39 / ExPEC).